A 6269-amino-acid chain; its full sequence is MAQSTVSCYLPNFGATCDGPKRPLSLKLRTDALQSSGLLSAWREGQLTQLLQASWALILHRYTGSEDICFGYHQIGNVSQDLLQSLEAVDPALCKVSVKEGISLKMFFDQFKTHNSPDSPLEIDRSSRKASENARLYNTILMIQICHDSNGTSPAIPLPSSLPIALPQEVSTERLVLYLPVQPSETYLQSRVRLHVKVLQDEVNIFFEWWNNDMPTAQMKSIAGAFGHILTDLLAANDTAVDDLDIFPENDWSRVCSFNSVLPKKHERCIHEMIYDRTLLQPENEAVCSWDGSLTYKELDLLSSKVAYDLQQRGVGPEVCVALCFEKSKWYTVAMLAVLKAGGAFVPMDPSHPTARLQSLVEGVQAHIMLCSRSQTGKLQTVAETLIPLDEETVDGLPDLPTSTFSSTTVKSSNAAYVIFTSGSTGQPKGTLLEHRAYVSGALAHGPVFGLNSSTRVLQFASHAFDASLVDILSSLIFGSCICIPSEEARLNDIAGVINEMKVNHASLTPSFVGFLDPAAVPGLESLVLAGEAMSPQHLATWSHIKLVNGYGPTESSVAAALNPNMSSSSDCRDIGLPVGVRFWVVNPANHDQLVPVGCPGELVLEGPTLARCYINNPQKTSDSFIFNPCWTKRDPNGGSDRRFYKTGDLVRYNSESGSLTYIGRKDAQVKFHGQRVELGEIESQLSADTDIKHCTVLLPKSGFAQGKLVTVVSLSAGPGQALEADAVPLKLIEHREKLRYVKSIQERLSIRLPTYMVPGVWLCVEALPMLVSGKLDRKSIATWVASMSEDPEVHATEAANARAANSTEDQLVSIWSRVLNVPKDRISVDESFLSLGGDSIAAITCVGHCKKQGIGLTVQEILRSKSIRELATRVKGVTQPVAYHEMIEEPFGLSPIQKLHFMVRKEGQGYFNQSVVTRIDRQINDQDMRRAVEAVVMRHSMLRSRLVDPSTGNSLQLRITEDVAGSYRWRTHYMTAQNEIENAIAESQLCINAFVGPVFAVDFCYVDEDSHNLLSLVAHHLVVDIVSWRIILEDLEDFLLNPQGFVLQNSSLPFQTWCRLQDEQCESVAFENDVQLEDLPAPDLAYWGMEHRQMTYGDVICETFELDPGSTQSILLECHQSLRTEPVDLFLAALVHSFGQTFPERTLPVIYNEGHGREVWDSSLDISRTVGWFTTLYPIFVQEIVSEDPARTVARVKDLRRQVSDNGRQKFASRMFTGKGQQTCRHHYPLEMTFNYVGQHRDLQKQDGLFQLMGHMAGEAGQGGGAADFGEETPRFALLEISALVVQGQLRFTFSFNRFMRHQSGIHAWISRCHQLLASLGQKLQSLAPQPTLSDFPMLSLTYEELDKMVSAKLPIAGITSLDLVEDVYPCSRMQQGILLSQSRNTSVYAVHDTFEVKGVGIKPSVDRLIIAWQKVVSRHAMLRTVFLENLTSQDLFCQVVLKEYNPAPALLSCSEERDVLPTFDNQQPVNYRDPRPAHRFSICETANGKLFCRLEISHAAMDGTSISLIVRDLQSAYSGQLQEDRKPMFKDYMRYLQSCSHSAGLNYWLPYLSDVKPCHFPVLNDGRPSNKRLQVIRLDFSSLKELQALCESCGLTLSTAFSTAWGLTLRSFCGSNEVCFSYMASLRDVSVDEIGSVVGPVINLLACRMKVTEDVCLEDVLHQVQNDYMESLPYRHTSLIDIQHALKLSDTILLNSGISYRKLPPKTLSNRDEMRLVEVGKIHDPAEFPVYVNIEATDDVAYIDLNYWTTSLSEGQAQNVASTFLQSLENIIHHHDEKICRLDQLSAQNKQQIAVWNNTLPKAVEKCIHEILEDKVKQCPEAVAIAAWDGNLTYAKLNELSSLLAFYLTKLGVGPGLLVPIDLDKSSWQIVAILAVLRAGGICLPVDAAQPYEFIEKLLIDKDIQVALASPNKAQLLERTIPYVVPVGRSLFDYLPRFDDMPHVSHKAMDHAYVVFTGGSVKEPKGVMLQHLTVLTRAENFASALELNKATKVYQSATYTSDMFLNVLFGTMMRGGCVCIPANDGFNNLPRSINASRANTVVMTPSLASLLQPSEVPEVQLLALYGEILTNQVRTIWSEKVRTHSLYGAAECSSSCIHASDCQTLGETRNLGLAAGCITWLVNLSDHDLLVPIGSVGEVVIEGPVIASGYLLHNGHVKGGFIENPVWRMNFERDEPSNDLEKRDESSTLTRRMFKTGDLARYNSDGILVYMGRKERQTQRLQADIWDVQQCIDTFSLPGHPCVVEPIRCLDDDESVEHLAVFVQFASTHLEKADGQRSVIGQPSSQFFDSVTKMHTYLLSVLPVTQVPRLYIPVPSMPLTSTGLLDRWFLRNEAQNLPAQTRIEFDLKSFHDFWRVELAHPKPSPSQLLPSSTSATHRSSGTSTYEWNGHIEWRDISKLESASLEAALLAAWALTISGYTRSDDVIFGELLLEQDSSGLDSTSDKAAPVVVPRRLQIAEDMSIAELMRKTQERLVAASPFQRAGLQRIRNVSADTSRACSFNNLFCFTRFDCKVQTLALAYPLGIFCIVANSELQLSACYDEQILSAPQVERILVQFARYVEYLKADLRSQETIGDMALRKNQTSYLSSPETVYWRKYLADVESCVFPSLNPDGERSGFSSAKLAIENLADLRRLCQKIEVTEDIVLQLVWGLVLRCYTGSEEVCYGYYQASPQPEGSKYLKVLPSRFLLKDDSDLESIAQQRKSELDEAMEHPISQIELQLELGFDWYSLLNTVFKFDRFAELPNDNNSTLDLLNDTEKGIWTIVVNPRFSFVSADILFEYRTDALSEANITSVVDCFQHILEEIINNDPVGHKIGDINFFGERACQQVREWNAALPERPDRCAHEIIEQQVLSHPTSPAICSWDGEFTYEQLDRLSTKLAKHLVCLGVKPEIFVGLCFEKSAWAVIAQVAVLKAGGAFASLDPSHPDARLRGLVDDIGAHIFLCSAKYLDKARQISRAAYIVSEETLAELPDVSSTASMTRPSIHNAAYAIFTSGTTGKPKVTVLEHIALSVSSPAFARSMGMDTTTRALQFSSYTFDVSIKEIIIVLMTGGCVCVPSDEERMNDLSGAIRRLNANFISCPPSVSNTIQPESVPSVKTVVMGGEKMTASHIDRWGDRFVINAYGPSESTVMATMSVKVDEAGVRVNNDCNSIGAAICGRTWVVDPNNYQRLLPIGAVGELVLEGCNVARGYLNNDQKTKESFISDPAWTKAPGLKELFKRKERMYRTGDLVRYNPDGTICFISRKDTQIKFNGQRIELEEIEQQCISFLSGGTQVAVEVVEPESKAVARSIAAFFTVDNQSGQDRPDLESQLLVPMSEATREKVQKLREALIKALPPIMIPRLFFPVSHLPFSNSGKLDRKKLRATVETLPKDQLKSYATLTAGSRQASDEGVEGTLRSLWEEALGLASGSVSAEDSFFSLGGDSFSAMKLVGAANSQGISLTFADVYEDPVFMNMAKRCGMLQGRSGRQTVTPFSLLPASVDREQLLEEVAEQCGVPRASIVDLYPCSPVQEGLLTLSVKQNGAYIAQPIFRLSEGIDLDMFKAAWQQVVDELDILRTRIVHTESLNFLQAVIDKEEISWASATTLDELTAESPELPRHNGGRLTGYAIAASQTGRYFCWTIHHALYDGWSIPLVLRRVEEVYTNSTASARTVPYSLFINYLLERSMADSDEYWKSQLANLSCSPFPQSRNPLPDSVRVGNRHHSSMKISRAASGVDLTIPELIRAAWAIVVSAHTGSSDVCFGETLMGRNIDLAGVTDIAGPVLTTVPTRIQVDNELPITQYLENMHHLTTTMLPHQHSGLQQIRKLNSDTASACEFQNLLVIQTGEGQLNKALWVAEPIQTSGDFFTHPLVVECKVDTSEVSITMHHDEIVLNSWQTEKLIGQFSFVLEQLLSINKGETRKLSELEIFSPLDSKEVALWNKRHPEAVEKCAHDIISERCSTHPDAPAVCAWDGEVSYKEMYTLASSFASYLACRGVGPETLVPICLDKSLWAIITILGILIAGGAYVPLDPAHPTSRHEEILTEVDARILICSPQYQSRYSSIVKTIIPVSKETIRAYFALNYQAKGLRRVTPFNMAYAIFTSGSTGRAKGIIIDHRALASSAMAFGPIVHLNETSRAFQFASLTFDAAVMEILATLMHGGCICIPSEDERLNDVAGAIRRMNVTWTFLTPSIASIIEPSTVPSLEVLACGGEKLSREVVTKWAHRVKLINGYGPTETTIFAVLNNVSPTTDPACIGYGIPCTLTWVVDPENHDRLTPLGAIGELALEGPALAREYLKNPKKTAEAFVDEPAWMKHFQSTLPSPRRIYKTGDLVRYNPDGSVEYISRKDYQVKLHGQRMELGEIEHRLHEDDRVRHAIVILPKEGLLKGRLVTILSLNSLKSGSSIISDNACELISREDLARVAYSELITIQKNLEAQLPIYMVPQTWAVIKKLPMLVSGKLDRKKITHWIENIDEPTYDRIMQDYDNIKRGHVEDSVNEDKSTAAKILQDIYAQVLNLPSNKVDPKRSFVSLGGDSITGMAVISRARKQGLNLTLHKILQSKSIVELIQAAEVETSSIQVEEKANKYFSLSPIQNLYFKSARTFKETGRFNQGMTVRVTRKVEPNVVKDALKAVASQHSMLRARFSRSANGKWQQRITNDIESSVRVGIHSVMSSHEMLGKIANTQSSLDIENGPIIAADLFTVNGEQVLFLVANHLCVDMVSWRIILQDIQEVIEAGSLSSEKPFSFQSWCELQLENSRSEADKAKLPFAIEPPNLSYWGMESVPNHYGQIRMESFVVGEDTTSFILGDCHEMLRTETIDILLAAVAQSFRRVFTDRRMPTIYNEGHGRESWDSNLDLSRTVGWFTTLCPLQVDECSGSDFVDTTKRVKDLRRKIKDNGRSYFARSLLQANNTEPSDFPVPLEIVFNYLGRLQQLERDDSLFKHYGEAFDEEKFRLAGDMGSDTPRFALLEISALVVNDKLQVSFTYNRQMQRESQIFQWISECRRVLEIDVLRFKDTVPEPTLSDFPLLPITYDGLKKLTSTTLPRAGVKTFSQVEDIYPCSSVQEGILLSQLRDPSAYMFHVIFEVRSPGGSGKVDPNMLRSAWSAVINRHPILRTLFIDSNYANGTFDQLVLRKVDEGAIILHCNDSDALVKLDTIKLSEINAGRCPKLLHQLTVCSTDSGRVLIKLEMNHAIIDGGSVDLLLRDLAMAYKHQLPEGSGPHFSDYIKFVRGKSQSQALSHWRQYLSDAHPCHLTFSEGTGGSRQLGSVMVPFSRYSELQQFCEKNSVTLANLTLAAWAIVLQSFTGSNDVCFGYPSAGRDAPVPGIQDAVGIFLNMLCCRVRFSPGKTLLEVSKTVQDDYIKNLPYQDCSLASIQHELGQKELFNTTISIQNHHAVSEESGNDLLSFDVQTAHDPTEYPVTVNVETAKGHEGILLRYWTDAVPEDKANNLANAIAHIFSCFIDKPSQLVSELDLRGGQLMKGGQFIDSKSLQELIDRRVTEIISQMLKEGTLAIPAADNGKGQFKGTTRAQPAKVTIKARGMHRERDLSDSTATLTEDHSKLMEPEKRLWKIWCSALGLASDTIQRQASFFKLGGDSITAMKMVSAAREDGLTLTMADVFNNPVFEDMLAAISASNSSSALEPDSPADSNNEKPAEPPRLVELERNPPPPEISLLKTVPLNDSALQDGICPKIGVFKGGIADVLPVTDFQAMSITATLFKSRWMLNYFFFDGRGSLDLRRLRESLLRVVDAFDILRTVFVCFNGQFFQVVLRKIRPNIFVHETEKNLDEYTEYLQQQDREQEARQGEQYVKFYIVKKKGSNHHRILIRMSHAQFDGLCLPTIMSAIKLGYEGSTLPPAPSFANYMRMLSGAITPDHYQHWTNLLKGSKMTQVIRRTEENTYRYIGAFREQRKTLEIQPSVLENVTIATVMQAAWAVTLAKLSAQSDVVFGLTISGRNTSIPGIENTVGPCLNVIPIRVTFKEGWTGVDLFRYLQDQQIANMPFEALGFREIIRRCTDWPSSTYFTTSVFHQNVEYEGQMQLDNTTYRMGGAGVVDNFTDMTLFSKSSSDGKLGVSLGYSDKGPIGPKFAAKVLSMVCDTVQSLLANSRVGLPSPSMLRSLPCQSVHDVPGMTDEMFLSTHLKDRSISDILVHSDVVTQAWQQVLPRNNADEPQSSFQLDSSFFELGGDVFDMAQVVWLLEQEGLQVHIEDLLEHPTFLGQMAVLTLHNSRTSDSMEEIVPVEEIPLPAARTGTSSSLGKALTLAKKVTRWSALSARG.

An adenylation 1 region spans residues 249 to 781 (ENDWSRVCSF…VSGKLDRKSI (533 aa)). In terms of domain architecture, Carrier 1 spans 803–879 (RAANSTEDQL…ELATRVKGVT (77 aa)). Ser840 carries the post-translational modification O-(pantetheine 4'-phosphoryl)serine. Residues 894 to 1342 (LSPIQKLHFM…TLSDFPMLSL (449 aa)) are epimerase 1. The segment at 1373-1775 (SRMQQGILLS…FLQSLENIIH (403 aa)) is condensation 1. The adenylation 2 stretch occupies residues 1725–2333 (HDPAEFPVYV…TGLLDRWFLR (609 aa)). The tract at residues 2364–2386 (KPSPSQLLPSSTSATHRSSGTST) is disordered. Positions 2367–2376 (PSQLLPSSTS) are enriched in low complexity. The span at 2377-2386 (ATHRSSGTST) shows a compositional bias: polar residues. The segment at 2597 to 2670 (WRKYLADVES…TGSEEVCYGY (74 aa)) is condensation 2. Residues 2845–3368 (RCAHEIIEQQ…SGKLDRKKLR (524 aa)) are adenylation 3. The Carrier 2 domain maps to 3392–3468 (ASDEGVEGTL…NMAKRCGMLQ (77 aa)). The residue at position 3429 (Ser3429) is an O-(pantetheine 4'-phosphoryl)serine. The interval 3512–3898 (CSPVQEGLLT…GQFSFVLEQL (387 aa)) is condensation 3. The adenylation 4 stretch occupies residues 3919–4454 (DSKEVALWNK…VSGKLDRKKI (536 aa)). A Carrier 3 domain is found at 4487 to 4563 (EDKSTAAKIL…ELIQAAEVET (77 aa)). Residue Ser4524 is modified to O-(pantetheine 4'-phosphoryl)serine. The segment at 4578 to 5024 (LSPIQNLYFK…DFPLLPITYD (447 aa)) is epimerase 2. The condensation 4 stretch occupies residues 5052 to 5466 (SSVQEGILLS…PSQLVSELDL (415 aa)). In terms of domain architecture, Carrier 4 spans 5552-5628 (SKLMEPEKRL…DMLAAISASN (77 aa)). An O-(pantetheine 4'-phosphoryl)serine modification is found at Ser5589. A disordered region spans residues 5628–5658 (NSSSALEPDSPADSNNEKPAEPPRLVELERN). Residues 5642-5657 (NNEKPAEPPRLVELER) are compositionally biased toward basic and acidic residues. The interval 5720 to 6067 (FFFDGRGSLD…SSSDGKLGVS (348 aa)) is condensation 5. The region spanning 6139-6220 (SDILVHSDVV…GQMAVLTLHN (82 aa)) is the Carrier 5 domain.

This sequence belongs to the NRP synthetase family. The thiolation domains are 4'-phosphopantetheinylated.

Nonribosomal peptide synthesis (NRPS) is a key mechanism responsible for the biosynthesis of bioactive metabolites which are potentially contributing to organismal virulence. Contributes to improved fungal tolerance against oxidative stress, during the infection process. The polypeptide is Nonribosomal peptide synthetase 1 (NRPS1) (Aspergillus fumigatus (strain ATCC MYA-4609 / CBS 101355 / FGSC A1100 / Af293) (Neosartorya fumigata)).